Reading from the N-terminus, the 262-residue chain is Adenosylcobinamide-GDP ribazoletransferase (262 aa).

5 helical membrane-spanning segments follow: residues 41–61 (AFPLAAILITLPAAAIAFILG), 65–85 (ASSLFSAFLVVAVQAMVTGAL), 115–132 (IGTYGAVALILSFGLRVS), 134–156 (LAAFLPLLTPTGGGIALLATAAL), and 195–215 (GVLLALVLFFLAGIPTVAVWL).

Belongs to the CobS family. Mg(2+) is required as a cofactor.

Its subcellular location is the cell inner membrane. The catalysed reaction is alpha-ribazole + adenosylcob(III)inamide-GDP = adenosylcob(III)alamin + GMP + H(+). It carries out the reaction alpha-ribazole 5'-phosphate + adenosylcob(III)inamide-GDP = adenosylcob(III)alamin 5'-phosphate + GMP + H(+). It functions in the pathway cofactor biosynthesis; adenosylcobalamin biosynthesis; adenosylcobalamin from cob(II)yrinate a,c-diamide: step 7/7. In terms of biological role, joins adenosylcobinamide-GDP and alpha-ribazole to generate adenosylcobalamin (Ado-cobalamin). Also synthesizes adenosylcobalamin 5'-phosphate from adenosylcobinamide-GDP and alpha-ribazole 5'-phosphate. The protein is Adenosylcobinamide-GDP ribazoletransferase of Rhizobium meliloti (strain 1021) (Ensifer meliloti).